Consider the following 393-residue polypeptide: Zinc finger CCCH domain-containing protein 2 (393 aa).

Residues 1-71 (MDVVCTEHQM…NRENKEYCYD (71 aa)) are disordered. The span at 20–37 (RKLLLSSKSFPSDSSSPR) shows a compositional bias: low complexity. Residues 60 to 69 (DNNRENKEYC) show a composition bias toward basic and acidic residues. 2 consecutive C3H1-type zinc fingers follow at residues 122–150 (QYSGEVCPEFRRGGDCSRGDDCEFAHGVF) and 159–181 (YRTEACKDGKHCKRKVCFFAHSP).

As to quaternary structure, interacts with MARD1/FLZ9 and RD21A. Specifically expressed in seeds.

The protein resides in the nucleus. In terms of biological role, probable transcription repressor that functions as a negative regulator of phytochrome-mediated promotion of seed germination. Inhibits seed germination by regulating the expression of gibberellic acid (GA) and abscisic acid (ABA) metabolic genes. Does not regulate the expression of the DELLA genes RGA and RGA1. Activated by PIL5, a phytochrome-interacting basic helix-loop-helix transcription factor. Represses directly JMJ20 and JMJ22 expression in the absence of red light (R) and in far-red (FR) conditions. The polypeptide is Zinc finger CCCH domain-containing protein 2 (Arabidopsis thaliana (Mouse-ear cress)).